The following is a 298-amino-acid chain: Troponin T, cardiac muscle (298 aa).

The segment covering 1–70 (MSDIEEVVEE…EAKEAEDGPM (70 aa)) has biased composition (acidic residues). Disordered regions lie at residues 1–95 (MSDI…GERV) and 120–219 (FENR…EKKK). Residue serine 2 is modified to N-acetylserine. Serine 2 carries the phosphoserine; by CK2 modification. Basic and acidic residues-rich tracts occupy residues 120-183 (FENR…DEAR) and 203-219 (QTER…EKKK). Position 204 is a phosphothreonine; by PKC/PRKCA (threonine 204). The residue at position 208 (serine 208) is a Phosphoserine; by PKC/PRKCA. Position 213 is a phosphothreonine; by PKC/PRKCA and RAF1 (threonine 213). Position 294 is a phosphothreonine; by PKC/PRKCA (threonine 294).

It belongs to the troponin T family. In terms of processing, phosphorylation at Thr-213 by PRKCA induces significant reduction in myofilament calcium sensitivity and actomyosin ATPase activity. In terms of tissue distribution, heart. The fetal heart shows a greater expression in the atrium than in the ventricle, while the adult heart shows a greater expression in the ventricle than in the atrium. Isoform 6 predominates in normal adult heart. Isoforms 1, 7 and 8 are expressed in fetal heart. Isoform 7 is also expressed in failing adult heart.

In terms of biological role, troponin T is the tropomyosin-binding subunit of troponin, the thin filament regulatory complex which confers calcium-sensitivity to striated muscle actomyosin ATPase activity. This is Troponin T, cardiac muscle (TNNT2) from Homo sapiens (Human).